The following is a 119-amino-acid chain: Large ribosomal subunit protein uL18 (119 aa).

It belongs to the universal ribosomal protein uL18 family. In terms of assembly, part of the 50S ribosomal subunit; part of the 5S rRNA/L5/L18/L25 subcomplex. Contacts the 5S and 23S rRNAs.

In terms of biological role, this is one of the proteins that bind and probably mediate the attachment of the 5S RNA into the large ribosomal subunit, where it forms part of the central protuberance. The chain is Large ribosomal subunit protein uL18 from Cupriavidus necator (strain ATCC 17699 / DSM 428 / KCTC 22496 / NCIMB 10442 / H16 / Stanier 337) (Ralstonia eutropha).